The sequence spans 103 residues: Large ribosomal subunit protein bL21 (103 aa).

It belongs to the bacterial ribosomal protein bL21 family. As to quaternary structure, part of the 50S ribosomal subunit. Contacts protein L20.

This protein binds to 23S rRNA in the presence of protein L20. The sequence is that of Large ribosomal subunit protein bL21 from Herminiimonas arsenicoxydans.